Here is a 427-residue protein sequence, read N- to C-terminus: Putative zinc protease AlbF (427 aa).

Histidine 66 is a binding site for Zn(2+). Catalysis depends on glutamate 69, which acts as the Proton acceptor. 2 residues coordinate Zn(2+): histidine 70 and glutamate 142.

The protein belongs to the peptidase M16 family. Zn(2+) is required as a cofactor.

Its function is as follows. Required for production of the bacteriocin subtilosin. Could catalyze some step in the processing of presubtilosin. This is Putative zinc protease AlbF (albF) from Bacillus subtilis.